Reading from the N-terminus, the 273-residue chain is Shikimate dehydrogenase (NADP(+)) (273 aa).

Residues 15 to 17 (SQS) and Thr-62 each bind shikimate. Residue Lys-66 is the Proton acceptor of the active site. Glu-78 contributes to the NADP(+) binding site. Residues Asn-87 and Asp-102 each contribute to the shikimate site. Residues 127-131 (GAGGA), 151-156 (NRTVTK), and Met-215 contribute to the NADP(+) site. Shikimate is bound at residue Tyr-217. An NADP(+)-binding site is contributed by Gly-239.

This sequence belongs to the shikimate dehydrogenase family. As to quaternary structure, homodimer.

The enzyme catalyses shikimate + NADP(+) = 3-dehydroshikimate + NADPH + H(+). The protein operates within metabolic intermediate biosynthesis; chorismate biosynthesis; chorismate from D-erythrose 4-phosphate and phosphoenolpyruvate: step 4/7. Its function is as follows. Involved in the biosynthesis of the chorismate, which leads to the biosynthesis of aromatic amino acids. Catalyzes the reversible NADPH linked reduction of 3-dehydroshikimate (DHSA) to yield shikimate (SA). The polypeptide is Shikimate dehydrogenase (NADP(+)) (Laribacter hongkongensis (strain HLHK9)).